The following is a 555-amino-acid chain: Alpha-copaene synthase (555 aa).

Mg(2+) contacts are provided by D312, D316, D452, S456, and E460. The DDXXD motif signature appears at 312–316; sequence DDTYD.

It belongs to the terpene synthase family. Mg(2+) is required as a cofactor. In terms of tissue distribution, mainly expressed in sunflower trichomes.

It catalyses the reaction (2E,6E)-farnesyl diphosphate = alpha-copaene + diphosphate. The enzyme catalyses (2E,6E)-farnesyl diphosphate = alpha-muurolene + diphosphate. It carries out the reaction (2E,6E)-farnesyl diphosphate = alpha-humulene + diphosphate. Its pathway is secondary metabolite biosynthesis; terpenoid biosynthesis. Involved in the biosynthesis of germacrene-derived sesquiterpene lactones. Catalyzes the cyclization of farnesyl diphosphate to alpha-copaene, delta-cadinene, alpha-muurolene, beta-caryophyllene and alpha-humulene. The chain is Alpha-copaene synthase (CS) from Helianthus annuus (Common sunflower).